The chain runs to 503 residues: Maturase K (503 aa).

Belongs to the intron maturase 2 family. MatK subfamily.

The protein resides in the plastid. It localises to the chloroplast. Functionally, usually encoded in the trnK tRNA gene intron. Probably assists in splicing its own and other chloroplast group II introns. The protein is Maturase K of Kunzea pulchella (Red kunzea).